A 2124-amino-acid chain; its full sequence is Genome polyprotein (2124 aa).

Gly2 carries the N-myristoyl glycine; by host lipid modification. The interval 873–880 (VARDLLLI) is host EIF4E binding. One can recognise an SF3 helicase domain in the interval 1102 to 1264 (VQIATYFRNF…SAATKNGKLD (163 aa)). 1130–1137 (GKPGVGKS) is a binding site for ATP. A compositionally biased stretch (basic and acidic residues) spans 1415–1437 (DKPKEEEEEPEEKKEKKTEESKE). A disordered region spans residues 1415–1446 (DKPKEEEEEPEEKKEKKTEESKEAAGPYNGPT). Tyr1442 carries the post-translational modification O-(5'-phospho-RNA)-tyrosine. The region spanning 1459–1648 (SPLMDMEKKI…VGTRLTARMI (190 aa)) is the Peptidase C3 domain. Catalysis depends on for protease 3C activity residues His1501, Asp1535, and Cys1612. A RdRp catalytic domain is found at 1893-2011 (PYLYDFDYSN…ASKFELDLVM (119 aa)). Active-site for RdRp activity residues include Asp1899 and Asp1997.

Belongs to the picornaviruses polyprotein family. As to quaternary structure, interacts with host EIF4E. In terms of assembly, interacts with host IFIH1/MDA5; this interaction inhibits the induction of the IFN-beta signal pathway. Specific enzymatic cleavages by the viral protease in vivo yield a variety of precursors and mature proteins. The polyprotein seems to be cotranslationally cleaved at the 2A/2B junction by a ribosomal skip from one codon to the next without formation of a peptide bond. This process would release the P1-2A peptide from the translational complex. Post-translationally, during virion maturation, immature virions are rendered infectious following cleavage of VP0 into VP4 and VP2. This maturation seems to be an autocatalytic event triggered by the presence of RNA in the capsid and is followed by a conformational change of the particle. In terms of processing, myristoylation is required during RNA encapsidation and formation of the mature virus particle. Uridylylated by the polymerase and is covalently linked to the 5'-end of genomic RNA. This uridylylated form acts as a nucleotide-peptide primer for the polymerase.

It localises to the virion. It is found in the host cytoplasm. The protein localises to the host nucleus. The protein resides in the host nucleolus. Its subcellular location is the host cytoplasmic vesicle membrane. It catalyses the reaction RNA(n) + a ribonucleoside 5'-triphosphate = RNA(n+1) + diphosphate. It carries out the reaction ATP + H2O = ADP + phosphate + H(+). The catalysed reaction is Selective cleavage of Gln-|-Gly bond in the poliovirus polyprotein. In other picornavirus reactions Glu may be substituted for Gln, and Ser or Thr for Gly.. Forms an icosahedral capsid of pseudo T=3 symmetry with capsid proteins VP2 and VP3. Together they form an icosahedral capsid composed of 60 copies of each VP1, VP2, and VP3, with a diameter of approximately 300 Angstroms. VP4 lies on the inner surface of the protein shell formed by VP1, VP2 and VP3. All the three latter proteins contain a beta-sheet structure called beta-barrel jelly roll. VP1 is situated at the 12 fivefold axes, whereas VP2 and VP3 are located at the quasi-sixfold axes. In terms of biological role, lies on the inner surface of the capsid shell. After binding to the host receptor, the capsid undergoes conformational changes. Capsid protein VP4 is released, capsid protein VP1 N-terminus is externalized, and together, they shape a pore in the host membrane through which the viral genome is translocated into the host cell cytoplasm. After genome has been released, the channel shrinks. Functionally, VP0 precursor is a component of immature procapsids. Its function is as follows. Involved in host translation shutoff by inhibiting cap-dependent mRNA translation. Nuclear localization is required for this function. The resulting inhibition of cellular protein synthesis serves to ensure maximal viral gene expression and to evade host immune response. Affects membrane integrity and causes an increase in membrane permeability. In terms of biological role, associates with and induces structural rearrangements of intracellular membranes. It displays RNA-binding, nucleotide binding and NTPase activities. Interacts with IFIH1/MDA5 to inhibit the induction of the IFN-beta signal pathway. Functionally, serves as membrane anchor via its hydrophobic domain. Its function is as follows. Forms a primer, VPg-pU, which is utilized by the polymerase for the initiation of RNA chains. Cysteine protease that generates mature viral proteins from the precursor polyprotein. In addition to its proteolytic activity, it binds to viral RNA, and thus influences viral genome replication. RNA and substrate cooperatively bind to the protease. Cleaves host PABP1, this cleavage is important for viral replication. Cleaves host TANK and disrupts the TANK-TBK1-IKKepsilon-IRF3 complex, thereby inhibiting the induction of the IFN-beta signal pathway. In terms of biological role, replicates the genomic and antigenomic RNAs by recognizing replications specific signals. Performs VPg uridylylation. The polypeptide is Genome polyprotein (Cosavirus A (isolate Human/Pakistan/0553/-) (HCoSV-A)).